A 487-amino-acid chain; its full sequence is Spermatogenesis-associated protein 6 (487 aa).

The signal sequence occupies residues 1–17; it reads MPKVKALQCALALEIRS. Residues 170–221 form a disordered region; sequence APVEKPHSRLQNRTSRSQKKKSKSPERNKYCINAKNYEQPTTSKSHSPSPYT. Residue Asn181 is glycosylated (N-linked (GlcNAc...) asparagine). Positions 205-219 are enriched in polar residues; the sequence is NYEQPTTSKSHSPSP. Ser216 and Ser218 each carry phosphoserine. Lys247 is covalently cross-linked (Glycyl lysine isopeptide (Lys-Gly) (interchain with G-Cter in SUMO2)). Phosphoserine is present on residues Ser264, Ser273, Ser324, Ser342, Ser345, Ser353, Ser423, Ser464, and Ser486.

It belongs to the SPATA6 family. As to quaternary structure, interacts with MYL6.

The protein resides in the secreted. The protein localises to the cell projection. It localises to the cilium. It is found in the flagellum. Its function is as follows. Required for formation of the sperm connecting piece during spermiogenesis. Sperm connecting piece is essential for linking the developing flagellum to the head during late spermiogenesis. May be involved in myosin-based microfilament transport through interaction with myosin subunits. The sequence is that of Spermatogenesis-associated protein 6 (SPATA6) from Bos taurus (Bovine).